Consider the following 401-residue polypeptide: Probable tRNA sulfurtransferase (401 aa).

Residues 60–165 (EALFPHLKQV…EEATFLTIRD (106 aa)) form the THUMP domain. ATP-binding positions include 183-184 (ML), 208-209 (HF), arginine 265, glycine 287, and glutamine 296.

The protein belongs to the ThiI family.

Its subcellular location is the cytoplasm. It catalyses the reaction [ThiI sulfur-carrier protein]-S-sulfanyl-L-cysteine + a uridine in tRNA + 2 reduced [2Fe-2S]-[ferredoxin] + ATP + H(+) = [ThiI sulfur-carrier protein]-L-cysteine + a 4-thiouridine in tRNA + 2 oxidized [2Fe-2S]-[ferredoxin] + AMP + diphosphate. The catalysed reaction is [ThiS sulfur-carrier protein]-C-terminal Gly-Gly-AMP + S-sulfanyl-L-cysteinyl-[cysteine desulfurase] + AH2 = [ThiS sulfur-carrier protein]-C-terminal-Gly-aminoethanethioate + L-cysteinyl-[cysteine desulfurase] + A + AMP + 2 H(+). Its pathway is cofactor biosynthesis; thiamine diphosphate biosynthesis. Catalyzes the ATP-dependent transfer of a sulfur to tRNA to produce 4-thiouridine in position 8 of tRNAs, which functions as a near-UV photosensor. Also catalyzes the transfer of sulfur to the sulfur carrier protein ThiS, forming ThiS-thiocarboxylate. This is a step in the synthesis of thiazole, in the thiamine biosynthesis pathway. The sulfur is donated as persulfide by IscS. The protein is Probable tRNA sulfurtransferase of Bacillus subtilis (strain 168).